The sequence spans 230 residues: MCGNNMSAPMPAVVPAARKATAAVIFLHGLGDTGHGWAEAFAGIKSSHIKYICPHAPVMPVTLNMSMMMPSWFDIIGLSPDSQEDESGIKQAAETVKALIDQEVKNGIPSNRIILGGFSQGGALSLYTALTTQQKLAGVTALSCWLPLRASFSQGPINSANRDISVLQCHGDCDPLVPLMFGSLTVERLKGLVNPANVTFKVYEGMMHSSCQQEMMDVKYFIDKLLPPID.

Active-site charge relay system residues include serine 119, aspartate 174, and histidine 208. Lysine 224 carries the N6-acetyllysine modification.

The protein belongs to the AB hydrolase superfamily. AB hydrolase 2 family. Homodimer. Ubiquitous. Detected at low levels in all tissues tested.

The protein localises to the cytoplasm. Its subcellular location is the cell membrane. It is found in the nucleus membrane. It localises to the endoplasmic reticulum. It catalyses the reaction S-hexadecanoyl-L-cysteinyl-[protein] + H2O = L-cysteinyl-[protein] + hexadecanoate + H(+). The enzyme catalyses 1-hexadecanoyl-sn-glycero-3-phosphocholine + H2O = sn-glycerol 3-phosphocholine + hexadecanoate + H(+). It carries out the reaction a 1-(9Z-octadecenoyl)-2-acyl-sn-glycero-3-phosphocholine + H2O = a 2-acyl-sn-glycero-3-phosphocholine + (9Z)-octadecenoate + H(+). Acts as an acyl-protein thioesterase. Hydrolyzes fatty acids from S-acylated cysteine residues in proteins such as trimeric G alpha proteins or HRAS. Acts as a palmitoyl thioesterase that catalyzes depalmitoylation of proteins, such as ADRB2, KCNMA1 and SQSTM1. Acts as a negative regulator of autophagy by mediating palmitoylation of SQSTM1, decreasing affinity between SQSTM1 and ATG8 proteins and recruitment of ubiquitinated cargo proteins to autophagosomes. Acts as a lysophospholipase and hydrolyzes lysophosphatidylcholine (lyso-PC). Also hydrolyzes lysophosphatidylethanolamine (lyso-PE), lysophosphatidylinositol (lyso-PI) and lysophosphatidylserine (lyso-PS). Has much higher thioesterase activity than lysophospholipase activity. Contributes to the production of lysophosphatidic acid (LPA) during blood coagulation by recognizing and cleaving plasma phospholipids to generate lysophospholipids which in turn act as substrates for ENPP2 to produce LPA. In Rattus norvegicus (Rat), this protein is Acyl-protein thioesterase 1 (Lypla1).